The following is a 603-amino-acid chain: Elongation factor 4 (603 aa).

In terms of domain architecture, tr-type G spans 6–188; that stretch reads KYVRNFSIIA…DIVKNVPAPI (183 aa). GTP contacts are provided by residues 18 to 23 and 135 to 138; these read DHGKST and NKID.

It belongs to the TRAFAC class translation factor GTPase superfamily. Classic translation factor GTPase family. LepA subfamily.

It localises to the cell membrane. It catalyses the reaction GTP + H2O = GDP + phosphate + H(+). Required for accurate and efficient protein synthesis under certain stress conditions. May act as a fidelity factor of the translation reaction, by catalyzing a one-codon backward translocation of tRNAs on improperly translocated ribosomes. Back-translocation proceeds from a post-translocation (POST) complex to a pre-translocation (PRE) complex, thus giving elongation factor G a second chance to translocate the tRNAs correctly. Binds to ribosomes in a GTP-dependent manner. This is Elongation factor 4 from Finegoldia magna (strain ATCC 29328 / DSM 20472 / WAL 2508) (Peptostreptococcus magnus).